The primary structure comprises 457 residues: Arginine biosynthesis bifunctional protein ArgJ, mitochondrial (457 aa).

Substrate contacts are provided by Thr184, Lys213, Thr224, Glu312, Asn452, and Thr457. Thr224 (nucleophile) is an active-site residue.

The protein belongs to the ArgJ family. As to quaternary structure, heterodimer of an alpha and a beta chain. The alpha and beta chains are autoproteolytically processed from a single precursor protein within the mitochondrion.

It is found in the mitochondrion matrix. It carries out the reaction N(2)-acetyl-L-ornithine + L-glutamate = N-acetyl-L-glutamate + L-ornithine. It catalyses the reaction L-glutamate + acetyl-CoA = N-acetyl-L-glutamate + CoA + H(+). It participates in amino-acid biosynthesis; L-arginine biosynthesis; L-ornithine and N-acetyl-L-glutamate from L-glutamate and N(2)-acetyl-L-ornithine (cyclic): step 1/1. It functions in the pathway amino-acid biosynthesis; L-arginine biosynthesis; N(2)-acetyl-L-ornithine from L-glutamate: step 1/4. Its function is as follows. Catalyzes two activities which are involved in the cyclic version of arginine biosynthesis: the synthesis of acetylglutamate from glutamate and acetyl-CoA, and of ornithine by transacetylation between acetylornithine and glutamate. The chain is Arginine biosynthesis bifunctional protein ArgJ, mitochondrial from Aspergillus terreus (strain NIH 2624 / FGSC A1156).